The chain runs to 469 residues: MQVTETLNEGLKREIKIVVPAKALEEKLNEWLDDTKDKIKLNGFRPGKVPAEYLRKMYGKSFMAEILNEIISDAPRSILADRNERPAMQPQIDIDEDEKILDGRADFVFSLKYEVLPKFEIKDFDHIEIIREIAAVPEKEIDEQVERVLSSTRSYSLKEGLSEEGDCVTIDYLGKLEGVPFEGGADSDAQLILGSKQFIPGFEEQLVDVKAGDTKTISVKFPDNYSAVHLAGRDAEFDITVKAISKPDELKIDDEAAKKVGLESLERLREVVRGQIESQYGSIIRQKIKRQILDALDADYNFEIPEGLLEIEFNNIWAQVNDDLKKAGRSFEDEGVTEKHAREEYRVLAQRRVRLGLVLSEIGMKADVKISEDELKAAVFDQVRQYPGQEKEIMNFFRNTPEAVANLRAPIFEEKVIDHLLSRIKITDKEVTVEELMKEYDESDLTEKKPEKKKGVEKTPIRKKAPKKG.

The 86-residue stretch at Gly165–Leu250 folds into the PPIase FKBP-type domain. Basic and acidic residues predominate over residues Glu439–Pro460. The disordered stretch occupies residues Glu439–Gly469.

Belongs to the FKBP-type PPIase family. Tig subfamily.

It localises to the cytoplasm. It carries out the reaction [protein]-peptidylproline (omega=180) = [protein]-peptidylproline (omega=0). Functionally, involved in protein export. Acts as a chaperone by maintaining the newly synthesized protein in an open conformation. Functions as a peptidyl-prolyl cis-trans isomerase. The protein is Trigger factor of Bartonella quintana (strain Toulouse) (Rochalimaea quintana).